The primary structure comprises 155 residues: Troponin C, isoform 3 (155 aa).

4 consecutive EF-hand domains span residues Glu11 to Pro46, Phe47 to Glu82, Ala87 to Gln122, and Leu123 to Glu155. Residues Asp60, Asp62, Ser64, Arg66, and Glu71 each coordinate Ca(2+). Ca(2+)-binding residues include Asp136, Asp138, Ser140, Thr142, and Glu147.

This sequence belongs to the troponin C family. As to expression, present in both larval and adult muscles.

The sequence is that of Troponin C, isoform 3 (TpnC73F) from Drosophila melanogaster (Fruit fly).